A 368-amino-acid chain; its full sequence is Phospho-N-acetylmuramoyl-pentapeptide-transferase (368 aa).

Transmembrane regions (helical) follow at residues 31–51 (LTSMLVTFWFGHKIIDFLYGL), 73–93 (TMGGLLIIGSLLISVLLWGNL), 98–118 (VILLSVFSLSFSVLGFADDYM), 134–154 (FILSILISFIFCILFFYYTGT), 175–195 (GPVIALGIIAIPFSILVIIGS), 213–233 (VLISVMTLGVIAYFSGTPIVA), 249–269 (VFLSALTGALFGFLWFNAHPA), 271–291 (VFMGDTGSLFLGATLGMIVIL), 296–316 (ILLLILGAIFVSEALSVILQV), and 345–365 (KIVIRFWIIAVILAIISLSTL).

This sequence belongs to the glycosyltransferase 4 family. MraY subfamily. The cofactor is Mg(2+).

It is found in the cell inner membrane. The enzyme catalyses UDP-N-acetyl-alpha-D-muramoyl-L-alanyl-gamma-D-glutamyl-meso-2,6-diaminopimeloyl-D-alanyl-D-alanine + di-trans,octa-cis-undecaprenyl phosphate = di-trans,octa-cis-undecaprenyl diphospho-N-acetyl-alpha-D-muramoyl-L-alanyl-D-glutamyl-meso-2,6-diaminopimeloyl-D-alanyl-D-alanine + UMP. It functions in the pathway cell wall biogenesis; peptidoglycan biosynthesis. Functionally, catalyzes the initial step of the lipid cycle reactions in the biosynthesis of the cell wall peptidoglycan: transfers peptidoglycan precursor phospho-MurNAc-pentapeptide from UDP-MurNAc-pentapeptide onto the lipid carrier undecaprenyl phosphate, yielding undecaprenyl-pyrophosphoryl-MurNAc-pentapeptide, known as lipid I. In Leptospira interrogans serogroup Icterohaemorrhagiae serovar copenhageni (strain Fiocruz L1-130), this protein is Phospho-N-acetylmuramoyl-pentapeptide-transferase.